Consider the following 216-residue polypeptide: GTP cyclohydrolase 1 (216 aa).

Residues Cys-109, His-112, and Cys-180 each coordinate Zn(2+).

The protein belongs to the GTP cyclohydrolase I family. As to quaternary structure, homomer.

It catalyses the reaction GTP + H2O = 7,8-dihydroneopterin 3'-triphosphate + formate + H(+). Its pathway is cofactor biosynthesis; 7,8-dihydroneopterin triphosphate biosynthesis; 7,8-dihydroneopterin triphosphate from GTP: step 1/1. The protein is GTP cyclohydrolase 1 of Tolumonas auensis (strain DSM 9187 / NBRC 110442 / TA 4).